Consider the following 236-residue polypeptide: Small ribosomal subunit protein uS2c (236 aa).

Belongs to the universal ribosomal protein uS2 family.

Its subcellular location is the plastid. The protein resides in the chloroplast. This chain is Small ribosomal subunit protein uS2c (rps2), found in Aethionema grandiflorum (Persian stone-cress).